The sequence spans 458 residues: tRNA modification GTPase MnmE (458 aa).

The (6S)-5-formyl-5,6,7,8-tetrahydrofolate site is built by Arg26, Glu88, and Arg127. One can recognise a TrmE-type G domain in the interval Gly224 to Phe378. Asn234 contacts K(+). GTP is bound by residues Asn234–Ser239, Thr253–Thr259, and Asp278–Gly281. Ser238 contributes to the Mg(2+) binding site. K(+)-binding residues include Thr253, Ile255, and Thr258. Position 259 (Thr259) interacts with Mg(2+). Lys458 provides a ligand contact to (6S)-5-formyl-5,6,7,8-tetrahydrofolate.

This sequence belongs to the TRAFAC class TrmE-Era-EngA-EngB-Septin-like GTPase superfamily. TrmE GTPase family. Homodimer. Heterotetramer of two MnmE and two MnmG subunits. K(+) serves as cofactor.

It localises to the cytoplasm. Exhibits a very high intrinsic GTPase hydrolysis rate. Involved in the addition of a carboxymethylaminomethyl (cmnm) group at the wobble position (U34) of certain tRNAs, forming tRNA-cmnm(5)s(2)U34. The protein is tRNA modification GTPase MnmE of Streptococcus pyogenes serotype M1.